Consider the following 552-residue polypeptide: Urocanate hydratase (552 aa).

Residues 49 to 50 (GG), Gln127, 173 to 175 (GMG), Glu193, Arg198, 239 to 240 (NA), 260 to 264 (QTSAH), 270 to 271 (YI), and Tyr319 each bind NAD(+). The active site involves Cys407. Gly489 contributes to the NAD(+) binding site.

This sequence belongs to the urocanase family. NAD(+) is required as a cofactor.

The protein localises to the cytoplasm. The enzyme catalyses 4-imidazolone-5-propanoate = trans-urocanate + H2O. The protein operates within amino-acid degradation; L-histidine degradation into L-glutamate; N-formimidoyl-L-glutamate from L-histidine: step 2/3. Functionally, catalyzes the conversion of urocanate to 4-imidazolone-5-propionate. The polypeptide is Urocanate hydratase (Geobacillus sp. (strain WCH70)).